We begin with the raw amino-acid sequence, 98 residues long: Large ribosomal subunit protein uL23 (98 aa).

It belongs to the universal ribosomal protein uL23 family. In terms of assembly, part of the 50S ribosomal subunit. Contacts protein L29, and trigger factor when it is bound to the ribosome.

Its function is as follows. One of the early assembly proteins it binds 23S rRNA. One of the proteins that surrounds the polypeptide exit tunnel on the outside of the ribosome. Forms the main docking site for trigger factor binding to the ribosome. This chain is Large ribosomal subunit protein uL23, found in Ruegeria sp. (strain TM1040) (Silicibacter sp.).